The primary structure comprises 518 residues: Forkhead box protein H1 (518 aa).

Residues 72–113 (GSMYGLSPGTHEGSCTHTHEGPKDSMAGDQTRSRKSKKKNYH) are disordered. A compositionally biased stretch (basic residues) spans 104–113 (SRKSKKKNYH). Positions 117–213 (KPPYSYLAMI…MKLQNTALTR (97 aa)) form a DNA-binding region, fork-head. A disordered region spans residues 318 to 397 (KPTRNARSPG…NYSPIEPPKK (80 aa)). Residues 329–346 (STIHSTYSSSSSSISTIS) are compositionally biased toward low complexity. Residues 380–506 (TSSDPDTGNY…PSFLSQCLGS (127 aa)) are SMAD-interaction domain (SID). Residues 405 to 409 (LPTSY) carry the Fast/FoxH1 motif 1 (FM1) motif. The Fast/FoxH1 motif 2 (FM2) motif lies at 415-421 (PNVVAPP). An SMAD interaction motif (SIM) motif is present at residues 470 to 491 (LDNMLRAMPPNKSVFDVLTSHP).

In terms of assembly, ARF1 contains 2 smad2s, 1 smad4 and 1 foxh1/fast-1 protein. Interaction with smad4 is most likely indirect through interaction with the MH2 domain of smad2. Binds to the MH2 domain of smad3, which can incorporate into the ARF1 complex. The ARF1 and ARF2 complexes are activated by distinct TGF-beta family members; formation of ARF1 is promoted by activin. Interacts (via Fork-head domain) with gtf2ird1/wbscr11 (via repeats 4-5). In terms of tissue distribution, highly expressed in the animal cap (prospective ectoderm) and prospective mesoderm of stage 10.25 embryos.

It localises to the nucleus. Transcriptional activator. Recognizes and binds to the DNA sequence 5'-TGT[GT][GT]ATT-3'. Upon TGF-beta induction, forms a transcriptionally active complex with smad2 and smad4 called activin-responsive factor 1 (ARF1), which binds a site on the mix-B/mix.2 promoter called the activin response element (ARE). Binds to activated smads and the ARE with much lower affinity than fast3. Necessary for the first steps in mesoderm specification, directly inducing mesodermal genes. Acts with fast3 to control the convergent extension movements of gastrulation. Binds to the proximal element (PE) of the gsc gene and cooperates with gtf2ird1/wbscr11 and SMAD proteins to regulate gsc transcription. This is Forkhead box protein H1 (foxh1) from Xenopus laevis (African clawed frog).